Consider the following 1398-residue polypeptide: DNA-directed RNA polymerase subunit beta' (1398 aa).

4 residues coordinate Zn(2+): Cys-73, Cys-75, Cys-88, and Cys-91. Residues Asp-464, Asp-466, and Asp-468 each coordinate Mg(2+). Zn(2+) is bound by residues Cys-823, Cys-897, Cys-904, and Cys-907.

It belongs to the RNA polymerase beta' chain family. The RNAP catalytic core consists of 2 alpha, 1 beta, 1 beta' and 1 omega subunit. When a sigma factor is associated with the core the holoenzyme is formed, which can initiate transcription. The cofactor is Mg(2+). Zn(2+) is required as a cofactor.

The catalysed reaction is RNA(n) + a ribonucleoside 5'-triphosphate = RNA(n+1) + diphosphate. DNA-dependent RNA polymerase catalyzes the transcription of DNA into RNA using the four ribonucleoside triphosphates as substrates. The polypeptide is DNA-directed RNA polymerase subunit beta' (Gluconacetobacter diazotrophicus (strain ATCC 49037 / DSM 5601 / CCUG 37298 / CIP 103539 / LMG 7603 / PAl5)).